The following is a 98-amino-acid chain: Alpha-defensin 1 (98 aa).

Residues 1-19 form the signal peptide; that stretch reads MRTLTLLTALLLLALQVQT. The propeptide occupies 20 to 63; sequence QSLEETADQVPAQDQPGAEAQDITISFAGDERSAREASKSLIGT. 3 disulfide bridges follow: C66–C96, C68–C84, and C74–C95.

The protein belongs to the alpha-defensin family. Paneth cells of the small bowel.

Its subcellular location is the secreted. Functionally, has broad-spectrum antimicrobial properties. The antimicrobial activity decreases in the present of salt in vitro. Binds anionic phospholipids, which leads to the aggregation of liposomes in vitro. Membrane permeabilization of the target cells is an essential part of the peptide's mode of antimicrobial activity. No hemolytic activity against sheep or horse erythrocytes. Has antibacterial activity against the bacterial horse pathogens Gram-positive R.equi ATCC 33701 P(-) (minimum bactericidal concentration or MBC=5 ug/ml) and R.equi ATCC 33701 P(+) (MBC=5 ug/ml), which are resistant against beta-lactam antibiotics. Also has antibacterial activity against highly infectious wild-type strain R.equi 85F P(+) (MBC=5 ug/ml), S.equi subsp. equi (MBC=5 ug/ml), S.equi subsp. zooepidemicus (MBC=5 ug/ml), S.dysgalactiae subsp. equisimilis (MBC=10 ug/ml), S.choleraesuis subsp. choleraesuis serovar Typhimurium (MBC=10 ug/ml), and P.multocida subsp. multocida (MBC=&gt;10 ug/ml). Probably contributes to the antimicrobial barrier function of the small bowel mucosa. This Equus caballus (Horse) protein is Alpha-defensin 1.